The chain runs to 342 residues: A-type ATP synthase subunit C (342 aa).

Belongs to the V-ATPase V0D/AC39 subunit family. In terms of assembly, has multiple subunits with at least A(3), B(3), C, D, E, F, H, I and proteolipid K(x).

The protein resides in the cell membrane. Component of the A-type ATP synthase that produces ATP from ADP in the presence of a proton gradient across the membrane. In Archaeoglobus fulgidus (strain ATCC 49558 / DSM 4304 / JCM 9628 / NBRC 100126 / VC-16), this protein is A-type ATP synthase subunit C.